Here is a 316-residue protein sequence, read N- to C-terminus: MHAYTLIAPGKINLYLEIIGDRPDGYHELIMILQSIDLADRITLRPNGVQQFRLYCSHPQVPTDESNLAYRAAKLMQQEFPKQFDNFGGVDITIDKRIPVAAGLAGGSTNGAAVLVGLNLIWQLGLTQPELQGLASLLGSDVPFCVSGGTAIATGRGEQLDPIYDLDNLWVVLAKYTSIAVSTPWAYKTYRQLFNNTYISDRERIQARTHQVHAGPLMGAILQKDGAKIGRLLHNDLEKVVLPEYPQVAHLRETMAKMGGFGTMMSGSGPTVFTLCESYAQAEKIKQHIRENISDIDLQLWVAQLSNMGIQVEIAG.

Lysine 11 is a catalytic residue. 99–109 (PVAAGLAGGST) lines the ATP pocket. Residue aspartate 141 is part of the active site.

Belongs to the GHMP kinase family. IspE subfamily.

It carries out the reaction 4-CDP-2-C-methyl-D-erythritol + ATP = 4-CDP-2-C-methyl-D-erythritol 2-phosphate + ADP + H(+). Its pathway is isoprenoid biosynthesis; isopentenyl diphosphate biosynthesis via DXP pathway; isopentenyl diphosphate from 1-deoxy-D-xylulose 5-phosphate: step 3/6. In terms of biological role, catalyzes the phosphorylation of the position 2 hydroxy group of 4-diphosphocytidyl-2C-methyl-D-erythritol. The chain is 4-diphosphocytidyl-2-C-methyl-D-erythritol kinase from Gloeothece citriformis (strain PCC 7424) (Cyanothece sp. (strain PCC 7424)).